Consider the following 72-residue polypeptide: Teretoxin Tsu11.2 (72 aa).

The signal sequence occupies residues 1 to 21 (MMAKATMAFCFLLMLTTVMLP). The propeptide occupies 22-30 (TEGKTIAGR).

Belongs to the teretoxin H (TH) superfamily. Post-translationally, contains 4 disulfide bonds. As to expression, expressed by the venom duct.

The protein localises to the secreted. This is Teretoxin Tsu11.2 from Terebra subulata (Chocolate spotted auger).